Here is a 472-residue protein sequence, read N- to C-terminus: Ribosomal protein uS12 methylthiotransferase RimO (472 aa).

The 111-residue stretch at 33-143 (NRIGFVSLGC…VLKHVHKYVP (111 aa)) folds into the MTTase N-terminal domain. 6 residues coordinate [4Fe-4S] cluster: Cys-42, Cys-78, Cys-107, Cys-175, Cys-179, and Cys-182. In terms of domain architecture, Radical SAM core spans 161–398 (LTPKHYAYLK…MELQAEISAE (238 aa)). In terms of domain architecture, TRAM spans 401–467 (ARFVGRTLDI…EHDLWAEVVD (67 aa)).

This sequence belongs to the methylthiotransferase family. RimO subfamily. [4Fe-4S] cluster serves as cofactor.

The protein localises to the cytoplasm. The catalysed reaction is L-aspartate(89)-[ribosomal protein uS12]-hydrogen + (sulfur carrier)-SH + AH2 + 2 S-adenosyl-L-methionine = 3-methylsulfanyl-L-aspartate(89)-[ribosomal protein uS12]-hydrogen + (sulfur carrier)-H + 5'-deoxyadenosine + L-methionine + A + S-adenosyl-L-homocysteine + 2 H(+). Catalyzes the methylthiolation of an aspartic acid residue of ribosomal protein uS12. This Shewanella sp. (strain W3-18-1) protein is Ribosomal protein uS12 methylthiotransferase RimO.